Here is a 119-residue protein sequence, read N- to C-terminus: Beta-2-microglobulin (119 aa).

The first 20 residues, 1-20 (MARSVVVSLFVLLALAGLEA), serve as a signal peptide directing secretion. In terms of domain architecture, Ig-like C1-type spans 25–114 (PKIQVYSRHP…VTFQTPKTVK (90 aa)).

Belongs to the beta-2-microglobulin family. As to quaternary structure, heterodimer of an alpha chain and a beta chain. Beta-2-microglobulin is the beta-chain of major histocompatibility complex class I molecules.

Its subcellular location is the secreted. In terms of biological role, component of the class I major histocompatibility complex (MHC). Involved in the presentation of peptide antigens to the immune system. The sequence is that of Beta-2-microglobulin (B2M) from Brachyteles arachnoides (Southern muriqui).